We begin with the raw amino-acid sequence, 862 residues long: Linoleate 9S-lipoxygenase 1 (862 aa).

One can recognise a PLAT domain in the interval 34 to 161; the sequence is NDFGATIIDG…NYRYSRVFFA (128 aa). One can recognise a Lipoxygenase domain in the interval 164 to 862; sequence TYLPSQMPAA…AKGIPNSISI (699 aa). Residues 212–241 are disordered; sequence GRPILGGNSDHPYPRRGRTERKPNASDPSL. The Fe cation site is built by histidine 517, histidine 522, histidine 708, asparagine 712, and isoleucine 862.

Belongs to the lipoxygenase family. In terms of assembly, monomer. Requires Fe cation as cofactor.

It catalyses the reaction (9Z,12Z)-octadecadienoate + O2 = (9S)-hydroperoxy-(10E,12Z)-octadecadienoate. It participates in lipid metabolism; oxylipin biosynthesis. Plant lipoxygenase may be involved in a number of diverse aspects of plant physiology including growth and development, pest resistance, and senescence or responses to wounding. It catalyzes the hydroperoxidation of lipids containing a cis,cis-1,4-pentadiene structure. This chain is Linoleate 9S-lipoxygenase 1 (LOX1.1), found in Hordeum vulgare (Barley).